We begin with the raw amino-acid sequence, 955 residues long: Probable autotransporter YcgV (955 aa).

Residues 616–659 form a disordered region; it reads ASGTVPEPTPNPEPTPAPAQPPIVNPDPTPEPAPTPKPTTTADA. The span at 622-652 shows a compositional bias: pro residues; sequence EPTPNPEPTPAPAQPPIVNPDPTPEPAPTPK. The Autotransporter domain maps to 687 to 955; the sequence is NQSKDGNIWL…QVNGGYRFSF (269 aa).

In terms of biological role, upon overexpression shows increased adherence to polyvinyl chloride (PVC) plates, increased mature biofilm formation. The sequence is that of Probable autotransporter YcgV (ycgV) from Escherichia coli (strain K12).